The following is a 72-amino-acid chain: DNA-directed RNA polymerase subunit omega (72 aa).

The protein belongs to the RNA polymerase subunit omega family. As to quaternary structure, the RNAP catalytic core consists of 2 alpha, 1 beta, 1 beta' and 1 omega subunit. When a sigma factor is associated with the core the holoenzyme is formed, which can initiate transcription.

It carries out the reaction RNA(n) + a ribonucleoside 5'-triphosphate = RNA(n+1) + diphosphate. Functionally, promotes RNA polymerase assembly. Latches the N- and C-terminal regions of the beta' subunit thereby facilitating its interaction with the beta and alpha subunits. This chain is DNA-directed RNA polymerase subunit omega, found in Laribacter hongkongensis (strain HLHK9).